The chain runs to 321 residues: Lipoyl synthase (321 aa).

[4Fe-4S] cluster is bound by residues C60, C65, C71, C86, C90, C93, and S299. Residues 72–288 (WEKKHATFMI…ETIGRTKGFL (217 aa)) form the Radical SAM core domain.

It belongs to the radical SAM superfamily. Lipoyl synthase family. [4Fe-4S] cluster serves as cofactor.

The protein resides in the cytoplasm. The enzyme catalyses [[Fe-S] cluster scaffold protein carrying a second [4Fe-4S](2+) cluster] + N(6)-octanoyl-L-lysyl-[protein] + 2 oxidized [2Fe-2S]-[ferredoxin] + 2 S-adenosyl-L-methionine + 4 H(+) = [[Fe-S] cluster scaffold protein] + N(6)-[(R)-dihydrolipoyl]-L-lysyl-[protein] + 4 Fe(3+) + 2 hydrogen sulfide + 2 5'-deoxyadenosine + 2 L-methionine + 2 reduced [2Fe-2S]-[ferredoxin]. Its pathway is protein modification; protein lipoylation via endogenous pathway; protein N(6)-(lipoyl)lysine from octanoyl-[acyl-carrier-protein]: step 2/2. Functionally, catalyzes the radical-mediated insertion of two sulfur atoms into the C-6 and C-8 positions of the octanoyl moiety bound to the lipoyl domains of lipoate-dependent enzymes, thereby converting the octanoylated domains into lipoylated derivatives. This is Lipoyl synthase from Brucella anthropi (strain ATCC 49188 / DSM 6882 / CCUG 24695 / JCM 21032 / LMG 3331 / NBRC 15819 / NCTC 12168 / Alc 37) (Ochrobactrum anthropi).